Reading from the N-terminus, the 64-residue chain is Large ribosomal subunit protein bL35 (64 aa).

Residues methionine 1–lysine 26 are compositionally biased toward basic residues. Residues methionine 1–glycine 48 form a disordered region.

This sequence belongs to the bacterial ribosomal protein bL35 family.

This chain is Large ribosomal subunit protein bL35, found in Syntrophomonas wolfei subsp. wolfei (strain DSM 2245B / Goettingen).